We begin with the raw amino-acid sequence, 401 residues long: Protein zntC (401 aa).

The next 3 membrane-spanning stretches (helical) occupy residues 33 to 53 (GGLIAGIFVLTLTASFVPWFL), 61 to 81 (LVSVVSILTCLSAGVIIGAGF), and 114 to 134 (ITIVTMFALICVDKILVSGGL). Residues 141–247 (NHMDLSQHNH…SHKDEKDSEK (107 aa)) form a disordered region. The span at 167-184 (GDDDDDDVNEDQEEDSTK) shows a compositional bias: acidic residues. Low complexity predominate over residues 200 to 209 (HNSSNSSSNG). The segment covering 212-225 (HGLKKKKKSKKEHG) has biased composition (basic residues). Positions 226–247 (HGHNHDHSSNGHSHKDEKDSEK) are enriched in basic and acidic residues. Helical transmembrane passes span 256-276 (AWVFLVALSLHSIFDGLGLGS), 285-305 (GLLIAVLAHKFLDGLVLGIAI), 316-336 (CIALVFAAAMTPLGIGIGMAI), 351-371 (GIILSITCGSFIYISLIELLP), and 381-401 (KLKLAVAFLGYSVMAILALWV).

The protein belongs to the ZIP transporter (TC 2.A.5) family.

The protein localises to the membrane. Functionally, may transport divalent cations. May participate, with dstA, in the regulation of the differentiation of stalk cells during development. This is Protein zntC (zntC) from Dictyostelium discoideum (Social amoeba).